We begin with the raw amino-acid sequence, 609 residues long: MSNEFNAQSFLRTVSSSAGVYRMYDVKNDVIYVGKAKDLKKRLTSYFRKNLANVKTQALVSHIHHIDVTLTHSETDALLLENDYIKQYMPKYNVLLRDDKSYPYILLSQHEHPRLAYHRGPQREKGHYFGPYPNGGAVRESLHLMQKLFPIRQCDDLYYKSRSRPCLQYQISRCSAPCVGKVSNADYDEQVKLASLFLKGKDQQVISALVDKMELAAERQAYEQAARFRDQIMALRKVAEQQEVSNNKGDMDVIGVHYSSGIACFHLLFIREGKIFGSRSYYPSVPAQTDMDEVLRSFILQFYLNADIQRTIPKEVVISHNFEELHELEAAISEALDKKFSIKTNVRADRASFLRLAVTNATNAVVTRLSHKNTVEQRFVLLEEILELSTPIQRMECFDISHTMGESTVASCVVFNREGPHKGEYRRYNIEGITPGDDYAAMKQAVSRRFDKIEAGGKIPDILFIDGGLGQLRIAQKIVDEKFVHLDKAPQLIGVAKGEGRKPGLETLILGDTETSFSLEGDSPALHLIQHIRDESHRFAITGHRNRRQKTRNTSTLESIPGIGPKRRKALLQHLGGLQEVKGASVAELVKVPGISIEMAQTIHDALRG.

The 79-residue stretch at 16-94 folds into the GIY-YIG domain; that stretch reads SSAGVYRMYD…IKQYMPKYNV (79 aa). The UVR domain maps to 203–238; it reads QQVISALVDKMELAAERQAYEQAARFRDQIMALRKV.

This sequence belongs to the UvrC family. Interacts with UvrB in an incision complex.

It is found in the cytoplasm. The UvrABC repair system catalyzes the recognition and processing of DNA lesions. UvrC both incises the 5' and 3' sides of the lesion. The N-terminal half is responsible for the 3' incision and the C-terminal half is responsible for the 5' incision. This is UvrABC system protein C from Shewanella baltica (strain OS195).